A 474-amino-acid chain; its full sequence is Aspartyl/glutamyl-tRNA(Asn/Gln) amidotransferase subunit B (474 aa).

It belongs to the GatB/GatE family. GatB subfamily. As to quaternary structure, heterotrimer of A, B and C subunits.

The enzyme catalyses L-glutamyl-tRNA(Gln) + L-glutamine + ATP + H2O = L-glutaminyl-tRNA(Gln) + L-glutamate + ADP + phosphate + H(+). It carries out the reaction L-aspartyl-tRNA(Asn) + L-glutamine + ATP + H2O = L-asparaginyl-tRNA(Asn) + L-glutamate + ADP + phosphate + 2 H(+). In terms of biological role, allows the formation of correctly charged Asn-tRNA(Asn) or Gln-tRNA(Gln) through the transamidation of misacylated Asp-tRNA(Asn) or Glu-tRNA(Gln) in organisms which lack either or both of asparaginyl-tRNA or glutaminyl-tRNA synthetases. The reaction takes place in the presence of glutamine and ATP through an activated phospho-Asp-tRNA(Asn) or phospho-Glu-tRNA(Gln). The chain is Aspartyl/glutamyl-tRNA(Asn/Gln) amidotransferase subunit B from Wolbachia pipientis wMel.